Reading from the N-terminus, the 291-residue chain is 4-hydroxy-tetrahydrodipicolinate synthase (291 aa).

Position 47 (threonine 47) interacts with pyruvate. Tyrosine 134 (proton donor/acceptor) is an active-site residue. Lysine 162 functions as the Schiff-base intermediate with substrate in the catalytic mechanism. Residue isoleucine 205 coordinates pyruvate.

The protein belongs to the DapA family. Homotetramer; dimer of dimers.

It localises to the cytoplasm. It carries out the reaction L-aspartate 4-semialdehyde + pyruvate = (2S,4S)-4-hydroxy-2,3,4,5-tetrahydrodipicolinate + H2O + H(+). It functions in the pathway amino-acid biosynthesis; L-lysine biosynthesis via DAP pathway; (S)-tetrahydrodipicolinate from L-aspartate: step 3/4. Functionally, catalyzes the condensation of (S)-aspartate-beta-semialdehyde [(S)-ASA] and pyruvate to 4-hydroxy-tetrahydrodipicolinate (HTPA). The sequence is that of 4-hydroxy-tetrahydrodipicolinate synthase from Methanospirillum hungatei JF-1 (strain ATCC 27890 / DSM 864 / NBRC 100397 / JF-1).